Consider the following 260-residue polypeptide: 3'-5' ssDNA/RNA exonuclease TatD (260 aa).

A divalent metal cation-binding residues include Glu91, His127, and His152.

The protein belongs to the metallo-dependent hydrolases superfamily. TatD-type hydrolase family. TatD subfamily. In terms of assembly, monomer. The cofactor is Mg(2+).

Its subcellular location is the cytoplasm. Functionally, 3'-5' exonuclease that prefers single-stranded DNA and RNA. May play a role in the H(2)O(2)-induced DNA damage repair. The chain is 3'-5' ssDNA/RNA exonuclease TatD from Shigella flexneri serotype 5b (strain 8401).